Consider the following 96-residue polypeptide: Large ribosomal subunit protein bL27 (96 aa).

Positions 1–9 (MLKFDIQHF) are excised as a propeptide. Residues 1–33 (MLKFDIQHFAHKKGGGSTSNGRDSESKRLGAKR) form a disordered region. Residues 22–33 (RDSESKRLGAKR) show a composition bias toward basic and acidic residues.

The protein belongs to the bacterial ribosomal protein bL27 family. In terms of processing, the N-terminus is cleaved by ribosomal processing cysteine protease Prp.

This Listeria innocua serovar 6a (strain ATCC BAA-680 / CLIP 11262) protein is Large ribosomal subunit protein bL27.